Reading from the N-terminus, the 654-residue chain is Chaperone protein DnaK (654 aa).

T205 is modified (phosphothreonine; by autocatalysis). The disordered stretch occupies residues 592 to 654; that stretch reads ELERQMQQIG…EVEILDDKKP (63 aa). Polar residues predominate over residues 608–621; the sequence is AGQSETQSTGPGSY. Positions 622-636 are enriched in low complexity; that stretch reads QESSNQSSQHQTNNN.

It belongs to the heat shock protein 70 family.

Its function is as follows. Acts as a chaperone. This chain is Chaperone protein DnaK, found in Protochlamydia amoebophila (strain UWE25).